A 360-amino-acid polypeptide reads, in one-letter code: MTTTLQQRESASLWEQFCQWVTSTNNRIYVGWFGTLMIPTLLTATTCFIIAFIAAPPVDIDGIREPVAGSLLYGNNIISGAVVPSSNAIGLHFYPIWEAASLDEWLYNGGPYQLVVFHFLIGIFCYMGRQWELSYRLGMRPWICVAYSAPVSAATAVFLIYPIGQGSFSDGMPLGISGTFNFMIVFQAEHNILMHPFHMLGVAGVFGGSLFSAMHGSLVTSSLVRETTEVESQNYGYKFGQEEETYNIVAAHGYFGRLIFQYASFNNSRSLHFFLGAWPVIGIWFTAMGVSTMAFNLNGFNFNQSILDSQGRVIGTWADVLNRANIGFEVMHERNAHNFPLDLASGEQAPVALTAPAVNG.

Topologically, residues 1–31 (MTTTLQQRESASLWEQFCQWVTSTNNRIYVG) are cytoplasmic. The chain crosses the membrane as a helical span at residues 32–53 (WFGTLMIPTLLTATTCFIIAFI). Residues 54 to 110 (AAPPVDIDGIREPVAGSLLYGNNIISGAVVPSSNAIGLHFYPIWEAASLDEWLYNGG) lie on the Lumenal, thylakoid side of the membrane. Residues 111 to 134 (PYQLVVFHFLIGIFCYMGRQWELS) traverse the membrane as a helical segment. His-118 provides a ligand contact to chlorophyll a. Tyr-126 is a binding site for pheophytin a. Over 135–142 (YRLGMRPW) the chain is Cytoplasmic. The helical transmembrane segment at 143–161 (ICVAYSAPVSAATAVFLIY) threads the bilayer. Tyr-147 serves as a coordination point for pheophytin a. At 162-191 (PIGQGSFSDGMPLGISGTFNFMIVFQAEHN) the chain is on the lumenal, thylakoid side. Positions 170 and 189 each coordinate [CaMn4O5] cluster. Residues 192-218 (ILMHPFHMLGVAGVFGGSLFSAMHGSL) form a helical membrane-spanning segment. His-198 serves as a coordination point for chlorophyll a. Residues His-215, Ser-264, and Phe-265 each contribute to the a quinone site. His-215 provides a ligand contact to Fe cation. The Cytoplasmic portion of the chain corresponds to 219 to 270 (VTSSLVRETTEVESQNYGYKFGQEEETYNIVAAHGYFGRLIFQYASFNNSRS). Residues 271-295 (LHFFLGAWPVIGIWFTAMGVSTMAF) form a helical membrane-spanning segment. Residue His-272 coordinates Fe cation. Over 296 to 360 (NLNGFNFNQS…VALTAPAVNG (65 aa)) the chain is Lumenal, thylakoid. 5 residues coordinate [CaMn4O5] cluster: His-332, Glu-333, His-337, Asp-342, and Ala-344. The propeptide occupies 345–360 (SGEQAPVALTAPAVNG).

The protein belongs to the reaction center PufL/M/PsbA/D family. As to quaternary structure, PSII is composed of 1 copy each of membrane proteins PsbA, PsbB, PsbC, PsbD, PsbE, PsbF, PsbH, PsbI, PsbJ, PsbK, PsbL, PsbM, PsbT, PsbX, PsbY, PsbZ, Psb30/Ycf12, peripheral proteins PsbO, CyanoQ (PsbQ), PsbU, PsbV and a large number of cofactors. It forms dimeric complexes. The D1/D2 heterodimer binds P680, chlorophylls that are the primary electron donor of PSII, and subsequent electron acceptors. It shares a non-heme iron and each subunit binds pheophytin, quinone, additional chlorophylls, carotenoids and lipids. D1 provides most of the ligands for the Mn4-Ca-O5 cluster of the oxygen-evolving complex (OEC). There is also a Cl(-1) ion associated with D1 and D2, which is required for oxygen evolution. The PSII complex binds additional chlorophylls, carotenoids and specific lipids. serves as cofactor. In terms of processing, C-terminally processed by CtpA; processing is essential to allow assembly of the oxygen-evolving complex and photosynthetic growth. Tyr-161 forms a radical intermediate that is referred to as redox-active TyrZ, YZ or Y-Z.

It is found in the cellular thylakoid membrane. It carries out the reaction 2 a plastoquinone + 4 hnu + 2 H2O = 2 a plastoquinol + O2. In terms of biological role, photosystem II (PSII) is a light-driven water:plastoquinone oxidoreductase that uses light energy to abstract electrons from H(2)O, generating O(2) and a proton gradient subsequently used for ATP formation. It consists of a core antenna complex that captures photons, and an electron transfer chain that converts photonic excitation into a charge separation. The D1/D2 (PsbA/PsbD) reaction center heterodimer binds P680, the primary electron donor of PSII as well as several subsequent electron acceptors. The sequence is that of Photosystem II protein D1 2 from Synechocystis sp. (strain ATCC 27184 / PCC 6803 / Kazusa).